Reading from the N-terminus, the 471-residue chain is MKPKTIIEKIWENHVVYREDGKPDLLYIDLHLVHEVTSPQAFEGLRQKGRKVRRPDLTFATMDHNVPTVNRLVIEDEVARNQIAALERNCREFSIPLADLRSEEQGIVHVIGPELGLTQPGKTIVCGDSHTSTHGAFGALAFGIGTSEVEHVLATQTLWQHKPKTLQIRINGKLGEGVTAKDVILAIIGRYGVDVGTGYIIEFTGEVIRNMSMEERMTICNMSIEAGARAGLVSPDETTFAYLRGRKYAPKGEEFEKAVERWRALATDEGAEYDKTIEIDASTIAPMVTWGTNPSMSTSIEGTVPYPEDFSSETEQKAVRRALEYMGLEPGTPITEIPVQHVFIGSCTNSRISDLREAAKIVKGKKVAKGVRALVVPGSQQVKKQAEEEGLAQIFIDAGFEWRDSGCSACLGMNPDIIPEGEHCASTSNRNFEGRQGKGARTHLVSPAMAAAAAIYGHFVDVRKLQKEPVH.

[4Fe-4S] cluster is bound by residues Cys347, Cys407, and Cys410.

The protein belongs to the aconitase/IPM isomerase family. LeuC type 1 subfamily. Heterodimer of LeuC and LeuD. It depends on [4Fe-4S] cluster as a cofactor.

The enzyme catalyses (2R,3S)-3-isopropylmalate = (2S)-2-isopropylmalate. It functions in the pathway amino-acid biosynthesis; L-leucine biosynthesis; L-leucine from 3-methyl-2-oxobutanoate: step 2/4. Functionally, catalyzes the isomerization between 2-isopropylmalate and 3-isopropylmalate, via the formation of 2-isopropylmaleate. In Geobacillus sp. (strain WCH70), this protein is 3-isopropylmalate dehydratase large subunit.